The sequence spans 272 residues: B3 domain-containing protein Os10g0323000 (272 aa).

Positions 39 to 132 (RYGENRKHGQ…TLDLLILDKH (94 aa)) form a DNA-binding region, TF-B3 1. Residues 139–171 (PPSKRDLKLKSKRSTHQDSKGHPSNTDPGPSRI) are disordered. Over residues 141 to 159 (SKRDLKLKSKRSTHQDSKG) the composition is skewed to basic and acidic residues. Positions 180–272 (ESSANTQLLV…THLGVIVDIF (93 aa)) form a DNA-binding region, TF-B3 2.

Its subcellular location is the nucleus. This is B3 domain-containing protein Os10g0323000 from Oryza sativa subsp. japonica (Rice).